The sequence spans 398 residues: MSGVETVGVHADAHRDSWQVRAQKQITYEVRFRDDVFGLDSTDLLEAGADGAGSRRRFVVVDSAVDALYGSRIREYFTHHGIDHSILVMRVGETVKDFDTAGRIVAAMDAFGLARRREPMIVVGGGVLMDVAGLVASLYRRGTPFLRVPTTLVGLIDAGVGAKTGVNFNGHKNRLGTYAPADLTLLDRRFLATLDRRHLSNGLAEMLKIALIKDAELFQLLERHGRVLIEERFQGRTGTGDRAAVRALRAATHGMLEELGPNLWESRLERSVDYGHTFSPTIEMRALPALLHGEAVCVDMALTTVLAYRRGLLDVAQRDRIFAVMTALGLPTWHPLLTPEVLEAALQDTVRHRDGWQRLPLPVGIGGVTFVNDVTAAELQAAALMQHRLAEDALLLRA.

NAD(+) is bound by residues D62, E93 to K96, G126 to D130, T150 to T151, K163, K172, and F190 to T193. K163 is a catalytic residue. Positions 205, 276, and 292 each coordinate a divalent metal cation.

This sequence belongs to the sugar phosphate cyclases superfamily. EEVS family. NAD(+) is required as a cofactor. Requires Co(2+) as cofactor.

The enzyme catalyses D-sedoheptulose 7-phosphate = 2-epi-5-epi-valiolone + phosphate. Functionally, catalyzes the cyclization of D-sedoheptulose 7-phosphate to 2-epi-5-epi-valiolone. Does not use ido-heptulose 7-phosphate and 3-deoxy-arabino-heptulosonate 7-phosphate. Involved in the biosynthesis of the acarviose moiety of the alpha-glucosidase inhibitor acarbose. The protein is 2-epi-5-epi-valiolone synthase of Actinoplanes sp. (strain ATCC 31044 / CBS 674.73 / SE50/110).